The chain runs to 408 residues: MEAAPRSRPRPGGAAASPPPPPPPPPPEQERKLEQEKLSGVVKSVHRRLRKKYREVGDFDKIWREHCEDEETLCEYAVAMKNLADNHWAKTCEGEGRIEWCCSVCREYFQNGGKRKALEKDEKRALLASKSTPALNASQPPKIEDPLPNFGLTNHEAITEELLHSLGKIRLLDVGSCFNPFLKFEEFLTVGIDIVPAVESVYKCDFLNLQIQQPLQLAQDAIDAFLKQLKNPIDSLPGELFHVVVFSLLLSYFPSPYQRWICCKKAHELLVLNGLLLVITPDSSHQNRRAMMMKSWKIAIESLGFKRFKYSKFSHMHLMAFRKTSLQTTSDLVSRNYPGMLYIPQDFNSIEDEEYSNTSCYIRSDMEDEQLAYGFMELPDAPYDSDSGESQSSSIPFYELEDPVLLLS.

Over residues 1 to 16 the composition is skewed to low complexity; sequence MEAAPRSRPRPGGAAA. A disordered region spans residues 1-37; the sequence is MEAAPRSRPRPGGAAASPPPPPPPPPPEQERKLEQEK. Positions 17–27 are enriched in pro residues; it reads SPPPPPPPPPP. Positions 28 to 37 are enriched in basic and acidic residues; the sequence is EQERKLEQEK. R97, G175, D193, D205, F206, and S247 together coordinate S-adenosyl-L-methionine.

The protein belongs to the BMT2/SAMTOR family. As to quaternary structure, interacts with the GATOR1 complex; interaction is disrupted when SAMTOR binds S-adenosyl-L-methionine. Interacts with the KICSTOR complex; interaction is disrupted when SAMTOR binds S-adenosyl-L-methionine.

Its function is as follows. S-adenosyl-L-methionine-binding protein that acts as an inhibitor of mTORC1 signaling via interaction with the GATOR1 and KICSTOR complexes. Acts as a sensor of S-adenosyl-L-methionine to signal methionine sufficiency to mTORC1: in presence of methionine, binds S-adenosyl-L-methionine, leading to disrupt interaction with the GATOR1 and KICSTOR complexes and promote mTORC1 signaling. Upon methionine starvation, S-adenosyl-L-methionine levels are reduced, thereby promoting the association with GATOR1 and KICSTOR, leading to inhibit mTORC1 signaling. Probably also acts as a S-adenosyl-L-methionine-dependent methyltransferase. The polypeptide is S-adenosylmethionine sensor upstream of mTORC1 (Gallus gallus (Chicken)).